The primary structure comprises 221 residues: Imidazoleglycerol-phosphate dehydratase (221 aa).

Belongs to the imidazoleglycerol-phosphate dehydratase family.

It catalyses the reaction D-erythro-1-(imidazol-4-yl)glycerol 3-phosphate = 3-(imidazol-4-yl)-2-oxopropyl phosphate + H2O. Its pathway is amino-acid biosynthesis; L-histidine biosynthesis; L-histidine from 5-phospho-alpha-D-ribose 1-diphosphate: step 6/9. This chain is Imidazoleglycerol-phosphate dehydratase (HIS3), found in Kluyveromyces marxianus (Yeast).